A 117-amino-acid polypeptide reads, in one-letter code: Immunoglobulin heavy variable 3-5 (117 aa).

Residues 1–18 form the signal peptide; sequence MKMFTLLYLLTVVPGILS. Residues 19-117 enclose the Ig-like domain; the sequence is DVQLQESGPG…EDTATYYCAR (99 aa). Cysteine 40 and cysteine 115 are disulfide-bonded.

This is Immunoglobulin heavy variable 3-5 from Mus musculus (Mouse).